Here is an 81-residue protein sequence, read N- to C-terminus: Protein Vpu (81 aa).

Over 1 to 6 (MQPIQI) the chain is Extracellular. Residues 7–27 (AIVALVVAIIIAIVVWSIVII) traverse the membrane as a helical segment. At 28–81 (EYRKILRQRKIDRLIDRLIERAEDSGNESEGEISALVEMGVEMGHHAPWDVDDL) the chain is on the cytoplasmic side. Phosphoserine; by host CK2 is present on residues serine 52 and serine 56.

This sequence belongs to the HIV-1 VPU protein family. Homopentamer. Interacts with host CD4 and BRTC; these interactions induce proteasomal degradation of CD4. Interacts with host BST2; this interaction leads to the degradation of host BST2. Interacts with host FBXW11. Interacts with host AP1M1; this interaction plays a role in the mistrafficking and subsequent degradation of host BST2. Interacts with host RANBP2; this interaction allows Vpu to down-regulate host BLM sumoylation. In terms of processing, phosphorylated by host CK2. This phosphorylation is necessary for interaction with human BTRC and degradation of CD4.

The protein resides in the host membrane. Its activity is regulated as follows. Ion channel activity is inhibited by hexamethylene amiloride in vitro. In terms of biological role, enhances virion budding by targeting host CD4 and Tetherin/BST2 to proteasome degradation. Degradation of CD4 prevents any unwanted premature interactions between viral Env and its host receptor CD4 in the endoplasmic reticulum. Degradation of antiretroviral protein Tetherin/BST2 is important for virion budding, as BST2 tethers new viral particles to the host cell membrane. Mechanistically, Vpu bridges either CD4 or BST2 to BTRC, a substrate recognition subunit of the Skp1/Cullin/F-box protein E3 ubiquitin ligase, induces their ubiquitination and subsequent proteasomal degradation. The alteration of the E3 ligase specificity by Vpu seems to promote the degradation of host IKBKB, leading to NF-kappa-B down-regulation and subsequent apoptosis. Acts as a viroporin that forms an oligomeric ion channel in membranes. Modulates the host DNA repair mechanisms to promote degradation of nuclear viral cDNA in cells that are already productively infected in order to suppress immune sensing and proviral hyper-integration (superinfection). Manipulates PML-NBs and modulates SUMOylation of host BLM protein thereby enhancing its DNA-end processing activity toward viral unintegrated linear DNA. Also inhibits RAD52-mediated homologous repair of viral cDNA, preventing the generation of dead-end circular forms of single copies of the long terminal repeat and permitting sustained nucleolytic attack. This chain is Protein Vpu, found in Human immunodeficiency virus type 1 group M subtype B (isolate BH10) (HIV-1).